The chain runs to 325 residues: Melanocortin receptor 5 (325 aa).

Over 1 to 37 the chain is Extracellular; the sequence is MNSSSHLTLLDLTLNASEDNILGQNVNNKSSACEDMG. 3 N-linked (GlcNAc...) asparagine glycosylation sites follow: asparagine 2, asparagine 15, and asparagine 28. The chain crosses the membrane as a helical span at residues 38-61; it reads IAVEVFLTLGLVSLLENILVIGAI. Topologically, residues 62–73 are cytoplasmic; it reads VKNKNLHSPMYF. The helical transmembrane segment at 74 to 97 threads the bilayer; sequence FVGSLAVADMLVSMSNAWETITIY. At 98 to 114 the chain is on the extracellular side; sequence LINNKHVVIADTFVRHI. Residues 115-138 traverse the membrane as a helical segment; sequence DNVFDSMICISVVASMCSLLAIAV. Topologically, residues 139-155 are cytoplasmic; it reads DRYITIFYALRYHHIMT. A helical transmembrane segment spans residues 156-179; it reads ARRSGVIIACIWTFCISCGIVFII. The Extracellular segment spans residues 180 to 186; sequence YYESKYV. A helical membrane pass occupies residues 187–211; the sequence is IVCLISMFFTMLFFMVSLYIHMFLL. Residues 212–239 are Cytoplasmic-facing; that stretch reads ARNHVKRIAASPRYNSVRQRASMKGAIT. Residues 240-265 form a helical membrane-spanning segment; the sequence is LTMLLGIFIVCWSPFFLHLILMISCP. Residues 266–273 are Extracellular-facing; sequence QNVYCACF. The helical transmembrane segment at 274–297 threads the bilayer; sequence MSYFNMYLILIMCNSVIDPLIYAL. Residues 298–325 lie on the Cytoplasmic side of the membrane; that stretch reads RSQEMRRTFKEIICCHGFRRTCTLLGRY. S-palmitoyl cysteine attachment occurs at residues cysteine 311 and cysteine 312.

Belongs to the G-protein coupled receptor 1 family. As to expression, very low expression levels is detected in brain, while high levels are found in adrenals, stomach, lung and spleen.

The protein localises to the cell membrane. Functionally, receptor for MSH (alpha, beta and gamma) and ACTH. The activity of this receptor is mediated by G proteins which activate adenylate cyclase. This receptor is a possible mediator of the immunomodulation properties of melanocortins. The sequence is that of Melanocortin receptor 5 (Mc5r) from Rattus norvegicus (Rat).